A 131-amino-acid polypeptide reads, in one-letter code: Period circadian protein (131 aa).

The disordered stretch occupies residues 29–109; that stretch reads VTAPVELDPP…NSAGGASGGV (81 aa). A compositionally biased stretch (low complexity) spans 71–93; sequence SGNFTTGSNVRMSSVTNTSNAGT. Residues 94–109 are compositionally biased toward gly residues; that stretch reads GTSGGGNSAGGASGGV.

As to quaternary structure, forms a heterodimer with timeless (TIM); the complex then translocates into the nucleus. Post-translationally, phosphorylated with a circadian rhythmicity, probably by the double-time protein (dbt). Phosphorylation could be implicated in the stability of per monomer and in the formation of heterodimer per-tim.

It localises to the nucleus. It is found in the cytoplasm. Its subcellular location is the perinuclear region. Essential for biological clock functions. Determines the period length of circadian and ultradian rhythms; an increase in PER dosage leads to shortened circadian rhythms and a decrease leads to lengthened circadian rhythms. Essential for the circadian rhythmicity of locomotor activity, eclosion behavior, and for the rhythmic component of the male courtship song that originates in the thoracic nervous system. The biological cycle depends on the rhythmic formation and nuclear localization of the TIM-PER complex. Light induces the degradation of TIM, which promotes elimination of PER. Nuclear activity of the heterodimer coordinatively regulates PER and TIM transcription through a negative feedback loop. Behaves as a negative element in circadian transcriptional loop. Does not appear to bind DNA, suggesting indirect transcriptional inhibition. The sequence is that of Period circadian protein (per) from Zaprionus tuberculatus (Vinegar fly).